The chain runs to 249 residues: Metallo-beta-lactamase type 2 (249 aa).

The signal sequence occupies residues 1-22; sequence MLKKIKISLILALGLTSLQAFG. 5 residues coordinate Zn(2+): His-98, His-100, Asp-102, His-161, and Cys-180. Substrate is bound at residue Lys-183. Zn(2+) is bound at residue His-222.

This sequence belongs to the metallo-beta-lactamase superfamily. Class-B beta-lactamase family. Monomer. Zn(2+) is required as a cofactor.

Its subcellular location is the periplasm. The enzyme catalyses a beta-lactam + H2O = a substituted beta-amino acid. With respect to regulation, inhibited by chelating agents such as EDTA, 1-10 phenanthroline and pyridine-2,6-dicarboxylic acid. Confers resistance to the different beta-lactams antibiotics (penicillin, cephalosporin and carbapenem) via the hydrolysis of the beta-lactam ring. In Elizabethkingia meningoseptica (Chryseobacterium meningosepticum), this protein is Metallo-beta-lactamase type 2 (blaB1).